Reading from the N-terminus, the 255-residue chain is Homeobox protein DLX-1 (255 aa).

The span at 1-14 (MTMTTMPESLNSPV) shows a compositional bias: polar residues. 2 disordered regions span residues 1-38 (MTMT…MSHG) and 95-118 (SLAQ…EGGE). A compositionally biased stretch (low complexity) spans 25 to 36 (PPNQQMSPSPMS). Positions 100 to 112 (RLEDPGADSEKST) are enriched in basic and acidic residues. The homeobox DNA-binding region spans 128–187 (IRKPRTIYSSLQLQALNRRFQQTQYLALPERAELAASLGLTQTQVKIWFQNKRSKFKKLM). Positions 204–233 (ALSAGSPPVPPGWNPNSSSGKGSGSSAGSY) are disordered. The span at 217 to 232 (NPNSSSGKGSGSSAGS) shows a compositional bias: low complexity.

The protein belongs to the distal-less homeobox family. As to quaternary structure, interacts with SMAD4 (via homeobox DNA-binding domain). Interacts (via homeobox DNA-binding domain) with POU4F2; this interaction suppresses DLX1-mediated transcriptional activity in postnatal retina and enhances retinal ganglion cell (RGC) differentiation. In terms of tissue distribution, expressed in a restricted region of the developing brain, within the diencephalon and the adjacent telencephalic regions.

It is found in the nucleus. In terms of biological role, plays a role as a transcriptional activator or repressor. Inhibits several cytokine signaling pathways, such as TGFB1, activin-A/INHBA and BMP4 by interfering with the transcriptional stimulatory activity of transcription factors, such as MSX2, FAST2, SMAD2 and SMAD3 during hematopoietic cell differentiation. Plays a role in terminal differentiation of interneurons, such as amacrine and bipolar cells in the developing retina. Likely to play a regulatory role in the development of the ventral forebrain. May play a role in craniofacial patterning and morphogenesis and may be involved in the early development of diencephalic subdivisions. The protein is Homeobox protein DLX-1 (Dlx1) of Mus musculus (Mouse).